Reading from the N-terminus, the 338-residue chain is Citramalyl-CoA lyase, mitochondrial (338 aa).

Residues 1–20 (MALCVLQNAVRGAAALPRLK) constitute a mitochondrion transit peptide. 3 residues coordinate substrate: Y48, K55, and K59. N6-acetyllysine occurs at positions 55, 59, and 64. An N6-acetyllysine; alternate mark is found at K80 and K90. N6-succinyllysine; alternate is present on residues K80 and K90. Residue R105 participates in substrate binding. Residues E169 and D204 each contribute to the Mg(2+) site. 270–271 (IH) contributes to the substrate binding site. K307 carries the post-translational modification N6-succinyllysine. D318 is a catalytic residue.

This sequence belongs to the HpcH/HpaI aldolase family. Citrate lyase beta subunit-like subfamily. As to quaternary structure, homotrimer. The cofactor is Mg(2+).

The protein localises to the mitochondrion. It carries out the reaction glyoxylate + acetyl-CoA + H2O = (S)-malate + CoA + H(+). The enzyme catalyses propanoyl-CoA + glyoxylate + H2O = 3-methylmalate + CoA + H(+). The catalysed reaction is (3S)-citramalyl-CoA = pyruvate + acetyl-CoA. It catalyses the reaction (S)-malyl-CoA + H2O = (S)-malate + CoA + H(+). Its function is as follows. Mitochondrial citramalyl-CoA lyase indirectly involved in the vitamin B12 metabolism. Converts citramalyl-CoA into acetyl-CoA and pyruvate in the C5-dicarboxylate catabolism pathway. The C5-dicarboxylate catabolism pathway is required to detoxify itaconate, a vitamin B12-poisoning metabolite. Also acts as a malate synthase in vitro, converting glyoxylate and acetyl-CoA to malate. Also displays malyl-CoA thioesterase activity. Also acts as a beta-methylmalate synthase in vitro, by mediating conversion of glyoxylate and propionyl-CoA to beta-methylmalate. Also has very weak citramalate synthase activity in vitro. The sequence is that of Citramalyl-CoA lyase, mitochondrial (Clybl) from Rattus norvegicus (Rat).